Here is a 557-residue protein sequence, read N- to C-terminus: Formate--tetrahydrofolate ligase (557 aa).

Position 66-73 (66-73 (TPAGEGKS)) interacts with ATP.

The protein belongs to the formate--tetrahydrofolate ligase family.

The enzyme catalyses (6S)-5,6,7,8-tetrahydrofolate + formate + ATP = (6R)-10-formyltetrahydrofolate + ADP + phosphate. The protein operates within one-carbon metabolism; tetrahydrofolate interconversion. This Clostridium botulinum (strain Loch Maree / Type A3) protein is Formate--tetrahydrofolate ligase.